Here is a 391-residue protein sequence, read N- to C-terminus: Trehalose-phosphate phosphatase (391 aa).

Asp147 acts as the Nucleophile in catalysis. Mg(2+) contacts are provided by Asp147, Asp149, and Asp330. Substrate is bound at residue Asp147–Asp149.

Belongs to the trehalose phosphatase family. It depends on Mg(2+) as a cofactor.

The catalysed reaction is alpha,alpha-trehalose 6-phosphate + H2O = alpha,alpha-trehalose + phosphate. The protein operates within glycan biosynthesis; trehalose biosynthesis. Functionally, removes the phosphate from trehalose 6-phosphate to produce free trehalose. This Mycobacterium bovis (strain ATCC BAA-935 / AF2122/97) protein is Trehalose-phosphate phosphatase (otsB).